The primary structure comprises 224 residues: Germin-like protein 8-10 (224 aa).

Positions 1–22 (MASPSICLLAALLALVSWQAIA) are cleaved as a signal peptide. C32 and C47 are joined by a disulfide. The Cupin type-1 domain maps to 62–212 (AMLDTPRKTN…AFQVEKGTID (151 aa)). The N-linked (GlcNAc...) asparagine glycan is linked to N76. Mn(2+) contacts are provided by H109, H111, and E116. N-linked (GlcNAc...) asparagine glycosylation is present at N135. H157 contributes to the Mn(2+) binding site.

Belongs to the germin family. In terms of assembly, oligomer (believed to be a pentamer but probably hexamer).

The protein localises to the secreted. It localises to the extracellular space. The protein resides in the apoplast. In terms of biological role, plays a role in broad-spectrum disease resistance. Probably has no oxalate oxidase activity even if the active site is conserved. The sequence is that of Germin-like protein 8-10 (GLP2) from Oryza sativa subsp. japonica (Rice).